A 1745-amino-acid polypeptide reads, in one-letter code: ADAMTS-like protein 1 (1745 aa).

Positions 1-28 are cleaved as a signal peptide; the sequence is MECCRRAAPGTPLLVLAFLLLSSRTARS. Positions 33-82 constitute a TSP type-1 1 domain; sequence EGLWDAWGPWSECSRTCGGGASYSLRRCLSSKSCEGRNIRYRTCSNVDCP. Intrachain disulfides connect C45/C76, C49/C81, and C60/C66. A glycan (N-linked (GlcNAc...) asparagine) is linked at N251. 2 O-linked (Fuc...) serine glycosylation sites follow: S310 and S391. TSP type-1 domains are found at residues 376-424, 436-493, 522-584, 607-667, 703-762, and 763-825; these read PLPR…MYTP, DCPK…TPCY, EEPS…GPCN, ELYD…DPCP, CPPA…KKDD, and CPSE…ATCA. O-linked (Fuc...) threonine glycosylation occurs at T451. Cystine bridges form between C534–C578, C538–C583, and C549–C567. 4 disulfide bridges follow: C775/C819, C779/C824, C790/C807, and C874/C922. The Ig-like C2-type 1 domain maps to 836–938; sequence PHIAAARNIY…EQFVIKLIGG (103 aa). 2 disordered regions span residues 966-991 and 1114-1137; these read EALQ…GLTA and VSGF…RPHR. The span at 1115–1126 shows a compositional bias: low complexity; sequence SGFSSSLRSSSG. Ig-like C2-type domains are found at residues 1139 to 1241, 1261 to 1352, and 1378 to 1468; these read PAIL…IAVT, PTVT…TQLL, and PSVL…ASLV. Disulfide bonds link C1177/C1225, C1283/C1336, and C1401/C1452. 2 consecutive TSP type-1 domains span residues 1528–1591 and 1649–1709; these read CPSR…QLCV and CSVH…TPCE. Residues 1709–1745 enclose the PLAC domain; the sequence is ENTECRDTTRYCEKVRQLKLCQLGQFRSRCCGTCGKA.

In terms of assembly, monomer. Post-translationally, glycosylated. O-fucosylated by POFUT2 on a serine or a threonine residue found within the consensus sequence C1-X(2)-(S/T)-C2-G of the TSP type-1 repeat domains where C1 and C2 are the first and second cysteine residue of the repeat, respectively. Fucosylated repeats can then be further glycosylated by the addition of a beta-1,3-glucose residue by the glucosyltransferase, B3GALTL. Fucosylation mediates the efficient secretion of ADAMTS family members. Can also be C-glycosylated with one or two mannose molecules on tryptophan residues within the consensus sequence W-X-X-W of the TPRs, and N-glycosylated. These other glycosylations can also facilitate secretion. Disulfide bonds are present.

It is found in the secreted. It localises to the extracellular space. The protein resides in the extracellular matrix. The polypeptide is ADAMTS-like protein 1 (Adamtsl1) (Mus musculus (Mouse)).